The chain runs to 484 residues: Protein nucleotidyltransferase YdiU (484 aa).

Residues Gly87, Gly89, Arg90, Lys110, Asp122, Gly123, Arg173, and Arg180 each coordinate ATP. The active-site Proton acceptor is the Asp249. Mg(2+) contacts are provided by Asn250 and Asp259. Position 259 (Asp259) interacts with ATP.

It belongs to the SELO family. Mg(2+) is required as a cofactor. It depends on Mn(2+) as a cofactor.

It catalyses the reaction L-seryl-[protein] + ATP = 3-O-(5'-adenylyl)-L-seryl-[protein] + diphosphate. The enzyme catalyses L-threonyl-[protein] + ATP = 3-O-(5'-adenylyl)-L-threonyl-[protein] + diphosphate. The catalysed reaction is L-tyrosyl-[protein] + ATP = O-(5'-adenylyl)-L-tyrosyl-[protein] + diphosphate. It carries out the reaction L-histidyl-[protein] + UTP = N(tele)-(5'-uridylyl)-L-histidyl-[protein] + diphosphate. It catalyses the reaction L-seryl-[protein] + UTP = O-(5'-uridylyl)-L-seryl-[protein] + diphosphate. The enzyme catalyses L-tyrosyl-[protein] + UTP = O-(5'-uridylyl)-L-tyrosyl-[protein] + diphosphate. Functionally, nucleotidyltransferase involved in the post-translational modification of proteins. It can catalyze the addition of adenosine monophosphate (AMP) or uridine monophosphate (UMP) to a protein, resulting in modifications known as AMPylation and UMPylation. The sequence is that of Protein nucleotidyltransferase YdiU from Lachnoclostridium phytofermentans (strain ATCC 700394 / DSM 18823 / ISDg) (Clostridium phytofermentans).